The sequence spans 237 residues: Ribonuclease PH (237 aa).

Phosphate is bound by residues Arg86 and 124–126 (GTR).

Belongs to the RNase PH family. In terms of assembly, homohexameric ring arranged as a trimer of dimers.

The catalysed reaction is tRNA(n+1) + phosphate = tRNA(n) + a ribonucleoside 5'-diphosphate. Phosphorolytic 3'-5' exoribonuclease that plays an important role in tRNA 3'-end maturation. Removes nucleotide residues following the 3'-CCA terminus of tRNAs; can also add nucleotides to the ends of RNA molecules by using nucleoside diphosphates as substrates, but this may not be physiologically important. Probably plays a role in initiation of 16S rRNA degradation (leading to ribosome degradation) during starvation. The protein is Ribonuclease PH of Shewanella pealeana (strain ATCC 700345 / ANG-SQ1).